The primary structure comprises 511 residues: Histidine ammonia-lyase (511 aa).

The 5-imidazolinone (Ala-Gly) cross-link spans 142-144; it reads ASG. Serine 143 carries the post-translational modification 2,3-didehydroalanine (Ser).

Belongs to the PAL/histidase family. In terms of processing, contains an active site 4-methylidene-imidazol-5-one (MIO), which is formed autocatalytically by cyclization and dehydration of residues Ala-Ser-Gly.

Its subcellular location is the cytoplasm. The catalysed reaction is L-histidine = trans-urocanate + NH4(+). The protein operates within amino-acid degradation; L-histidine degradation into L-glutamate; N-formimidoyl-L-glutamate from L-histidine: step 1/3. In Brucella suis biovar 1 (strain 1330), this protein is Histidine ammonia-lyase.